Consider the following 593-residue polypeptide: Chaperone protein DnaK (593 aa).

Thr181 carries the phosphothreonine; by autocatalysis modification.

This sequence belongs to the heat shock protein 70 family.

In terms of biological role, acts as a chaperone. This chain is Chaperone protein DnaK, found in Mycoplasmoides gallisepticum (strain R(low / passage 15 / clone 2)) (Mycoplasma gallisepticum).